We begin with the raw amino-acid sequence, 197 residues long: Thymidylate kinase (197 aa).

Position 7 to 14 (7 to 14 (GIDGSGKS)) interacts with ATP.

This sequence belongs to the thymidylate kinase family.

It carries out the reaction dTMP + ATP = dTDP + ADP. Phosphorylation of dTMP to form dTDP in both de novo and salvage pathways of dTTP synthesis. This chain is Thymidylate kinase, found in Thermotoga petrophila (strain ATCC BAA-488 / DSM 13995 / JCM 10881 / RKU-1).